The chain runs to 126 residues: Probable flagellum biosynthesis repressor protein FlbT (126 aa).

The protein belongs to the FlbT family.

Its function is as follows. Has a post-transcriptional repressor function in flagellum biogenesis. Associates with the 5'-UTR of fljK mRNA and promotes its degradation. In Rhodopseudomonas palustris (strain ATCC BAA-98 / CGA009), this protein is Probable flagellum biosynthesis repressor protein FlbT.